The primary structure comprises 949 residues: Pyruvate, phosphate dikinase, chloroplastic (949 aa).

Residues 1 to 74 constitute a chloroplast transit peptide; the sequence is MASAFKGILI…VMAPASDPTS (74 aa). Phosphothreonine; by PDRP1 is present on T530. Residue H532 is the Tele-phosphohistidine intermediate of the active site. Substrate contacts are provided by R638, R695, E824, G845, T846, N847, and D848. A Mg(2+)-binding site is contributed by E824. D848 lines the Mg(2+) pocket. C910 acts as the Proton donor in catalysis.

This sequence belongs to the PEP-utilizing enzyme family. Homodimer. Requires Mg(2+) as cofactor. Post-translationally, phosphorylation of Thr-530 in the dark inactivates the enzyme. Dephosphorylation upon light stimulation reactivates the enzyme.

Its subcellular location is the plastid. The protein localises to the chloroplast. The enzyme catalyses pyruvate + phosphate + ATP = phosphoenolpyruvate + AMP + diphosphate + H(+). Activated by light-induced dephosphorylation. Inhibited by dark-induced phosphorylation. Both reactions are catalyzed by PDRP1. Functionally, formation of phosphoenolpyruvate, which is the primary acceptor of CO(2) in C4 and some Crassulacean acid metabolism plants. This Mesembryanthemum crystallinum (Common ice plant) protein is Pyruvate, phosphate dikinase, chloroplastic (PPD).